The chain runs to 270 residues: uncharacterized protein (270 aa).

Positions 1–10 (MFGLKVKDAT) are enriched in basic and acidic residues. 2 disordered regions span residues 1–115 (MFGL…PTPW) and 215–236 (QTGF…QGEQ). Composition is skewed to low complexity over residues 26–41 (SSSS…TQRG) and 98–113 (GTSP…GTPT).

Belongs to the adhesin P1 family.

This is an uncharacterized protein from Mycoplasma pneumoniae (strain ATCC 29342 / M129 / Subtype 1) (Mycoplasmoides pneumoniae).